A 138-amino-acid polypeptide reads, in one-letter code: Ribosome-binding factor A (138 aa).

The protein belongs to the RbfA family. In terms of assembly, monomer. Binds 30S ribosomal subunits, but not 50S ribosomal subunits or 70S ribosomes.

The protein localises to the cytoplasm. Functionally, one of several proteins that assist in the late maturation steps of the functional core of the 30S ribosomal subunit. Associates with free 30S ribosomal subunits (but not with 30S subunits that are part of 70S ribosomes or polysomes). Required for efficient processing of 16S rRNA. May interact with the 5'-terminal helix region of 16S rRNA. In Sodalis glossinidius (strain morsitans), this protein is Ribosome-binding factor A.